The chain runs to 244 residues: MSDMAMIRIGILIAGLLLVAAIFLFGRPKKSPQGRRVDKDDTQPRERREPVISSGVDADGMPFERSDTGAEQSELELDDQDGAGGNDVGKRPNQDFDKIVSLFVAAKAGQVLRGEDVVVAAEKTGLVFGHMNVFHRLVEGHPERGPIFSMASILKPGSFDMANIREMQTPAIAFFLTLPAPMTALDAWEKMLPTVQRMAELLDGVVLDDSRNALGRQRVAHIRDELRAYDRQHQAPPLTKSPRW.

At 1–4 (MSDM) the chain is on the periplasmic side. The helical transmembrane segment at 5-25 (AMIRIGILIAGLLLVAAIFLF) threads the bilayer. At 26-244 (GRPKKSPQGR…APPLTKSPRW (219 aa)) the chain is on the cytoplasmic side. Residues 30–91 (KSPQGRRVDK…GAGGNDVGKR (62 aa)) are disordered. Positions 35-50 (RRVDKDDTQPRERREP) are enriched in basic and acidic residues.

This sequence belongs to the ZipA family. In terms of assembly, interacts with FtsZ via their C-terminal domains.

Its subcellular location is the cell inner membrane. In terms of biological role, essential cell division protein that stabilizes the FtsZ protofilaments by cross-linking them and that serves as a cytoplasmic membrane anchor for the Z ring. Also required for the recruitment to the septal ring of downstream cell division proteins. This chain is Cell division protein ZipA, found in Xanthomonas campestris pv. campestris (strain ATCC 33913 / DSM 3586 / NCPPB 528 / LMG 568 / P 25).